Reading from the N-terminus, the 512-residue chain is Neuronal acetylcholine receptor subunit alpha-2 (512 aa).

The N-terminal stretch at M1–A27 is a signal peptide. Topologically, residues Q28 to L241 are extracellular. 2 N-linked (GlcNAc...) asparagine glycosylation sites follow: N56 and N106. Cysteines 160 and 174 form a disulfide. The N-linked (GlcNAc...) asparagine glycan is linked to N212. An intrachain disulfide couples C224 to C225. Transmembrane regions (helical) follow at residues P242–L266, I274–T292, and Y308–V329. At H330–R485 the chain is on the cytoplasmic side. Residues I486–L504 form a helical membrane-spanning segment.

The protein belongs to the ligand-gated ion channel (TC 1.A.9) family. Acetylcholine receptor (TC 1.A.9.1) subfamily. Alpha-2/CHRNA2 sub-subfamily. Neuronal AChR is composed of two different types of subunits: alpha and non-alpha (beta). CHRNA2/alpha-2 subunit can be combined to CHRNB2/beta-2 or CHRNB4/beta-4 to give rise to functional receptors. Both CHRNA2:CHRNB2 and CHRNA2:CHRNB4 nAChR complexes are heteropentamers with two subtypes: LS (low agonist sensitivity) with a (CHRNA2)3:(CHRNB2/4)2 and HS (high agonist sensitivity) with a (CHRNA2)2:(CHRNB2/4)3 stoichiometries; the subtypes differ in their subunit binding interfaces which are involved in ligand binding.

The protein resides in the synaptic cell membrane. The protein localises to the cell membrane. It catalyses the reaction Ca(2+)(in) = Ca(2+)(out). It carries out the reaction K(+)(in) = K(+)(out). The enzyme catalyses Na(+)(in) = Na(+)(out). Component of neuronal acetylcholine receptors (nAChRs) that function as pentameric, ligand-gated cation channels with high calcium permeability among other activities. nAChRs are excitatory neurotrasnmitter receptors formed by a collection of nAChR subunits known to mediate synaptic transmission in the nervous system and the neuromuscular junction. Each nAchR subunit confers differential attributes to channel properties, including activation, deactivation and desensitization kinetics, pH sensitivity, cation permeability, and binding to allosteric modulators. CHRNA2 forms heteropentameric neuronal acetylcholine receptors with CHRNB2 and CHRNB4 and plays a role in nicotine dependence. This chain is Neuronal acetylcholine receptor subunit alpha-2 (Chrna2), found in Mus musculus (Mouse).